Reading from the N-terminus, the 43-residue chain is Protein PsbN (43 aa).

Residues 5-25 (TLISVFVASLVIGITAYAIFV) form a helical membrane-spanning segment.

Belongs to the PsbN family.

It localises to the plastid. It is found in the chloroplast thylakoid membrane. Functionally, may play a role in photosystem I and II biogenesis. The polypeptide is Protein PsbN (Cyanidioschyzon merolae (strain NIES-3377 / 10D) (Unicellular red alga)).